A 589-amino-acid polypeptide reads, in one-letter code: Guanylate-binding protein 2 (589 aa).

The segment at 1–309 is GTPase domain (Globular); that stretch reads MASEIHMSEP…GAISNGSLPC (309 aa). In terms of domain architecture, GB1/RHD3-type G spans 35–276; the sequence is TQPVVVVAIV…FTSYILSYSS (242 aa). Residues 45-52, 181-182, and leucine 245 contribute to the GTP site; these read GLYRTGKS and RD. Position 586 is a cysteine methyl ester (cysteine 586). The S-geranylgeranyl cysteine moiety is linked to residue cysteine 586. The propeptide at 587–589 is removed in mature form; it reads TIL.

Belongs to the TRAFAC class dynamin-like GTPase superfamily. GB1/RHD3 GTPase family. GB1 subfamily. In terms of assembly, homodimer; homodimerization occurs upon GTP-binding and is required for the association with membranous structures. Heterodimer with other family members, including GBP1, GBP3, GBP4 and GBP5. Post-translationally, isoprenylation is required for proper subcellular location.

The protein resides in the cytoplasmic vesicle membrane. The protein localises to the golgi apparatus membrane. It localises to the cytoplasm. It is found in the perinuclear region. The catalysed reaction is GTP + H2O = GDP + phosphate + H(+). In terms of biological role, interferon (IFN)-inducible GTPase that plays important roles in innate immunity against a diverse range of bacterial, viral and protozoan pathogens. Hydrolyzes GTP to GMP in 2 consecutive cleavage reactions, but the major reaction product is GDP. Following infection, recruited to the pathogen-containing vacuoles or vacuole-escaped bacteria and acts as a positive regulator of inflammasome assembly by promoting the release of inflammasome ligands from bacteria. Acts by promoting lysis of pathogen-containing vacuoles, releasing pathogens into the cytosol. Following pathogen release in the cytosol, promotes recruitment of proteins that mediate bacterial cytolysis, such as Gm12250/Irgb10: this liberates ligands that are detected by inflammasomes, such as lipopolysaccharide (LPS) that activates the non-canonical CASP4/CASP11 inflammasome or double-stranded DNA (dsDNA) that activates the AIM2 inflammasome. Confers protection to the protozoan pathogen Toxoplasma gondii. Independently of its GTPase activity, acts as an inhibitor of various viruses infectivity by inhibiting FURIN-mediated maturation of viral envelope proteins. This Mus musculus (Mouse) protein is Guanylate-binding protein 2.